The chain runs to 876 residues: Radial spoke head 10 homolog B (876 aa).

The span at 1 to 16 shows a compositional bias: basic and acidic residues; it reads MVKEKKKADKKGDKSA. The segment at 1–71 is disordered; it reads MVKEKKKADK…VQMEQSEEET (71 aa). Over residues 17 to 37 the composition is skewed to polar residues; sequence RSPSSISDNPEASKQDSNASK. The segment covering 39–50 has biased composition (low complexity); the sequence is EVAPSAVVPVVE. 10 MORN repeats span residues 86–108, 109–129, 132–154, 155–172, 179–196, 204–225, 227–244, 251–268, 284–305, and 307–328; these read YEGE…GGNT, YHGM…WADG, YEGD…DGST, YEGE…MFKC, YIGH…SIYY, YEGD…KSGN, YEGQ…RMRW, YTGH…THTW, YIGE…ASGA, and YEGE…KNGH. Positions 356-372 are enriched in polar residues; the sequence is WSDASQRSRQPRGSSVS. Positions 356 to 386 are disordered; it reads WSDASQRSRQPRGSSVSAVREPETLRKLDGS. The span at 375 to 386 shows a compositional bias: basic and acidic residues; the sequence is REPETLRKLDGS. Residues 790–832 adopt a coiled-coil conformation; the sequence is LKEKVKENQLQEAELAQQRQIENEELEARLNILREEEARKQDF. The interval 839–876 is disordered; the sequence is LKEPSEIPASQPLTPSPPKEDLASIQTSKASPGKKKKK.

Interacts with RSPH6A. Does not appear to be part of the axonemal radial spoke complexes 1 or 2. In terms of tissue distribution, expressed in ependymal cells (at protein level).

Its subcellular location is the cytoplasm. It localises to the cytoskeleton. The protein localises to the cilium axoneme. It is found in the cell projection. The protein resides in the cilium. Its subcellular location is the flagellum. Its function is as follows. May function as part of the axonemal radial spoke complex 3 (RS3). Radial spoke complexes are important for ciliary motility. The protein is Radial spoke head 10 homolog B of Mus musculus (Mouse).